We begin with the raw amino-acid sequence, 309 residues long: Transcription elongation factor S-II (309 aa).

Residues 5–79 (EVLVHVKNLE…SSWKDAINKN (75 aa)) enclose the TFIIS N-terminal domain. Positions 78-142 (KNKRSRQAQQ…NSKNDGVDTA (65 aa)) are disordered. Basic and acidic residues predominate over residues 88 to 102 (HHQDHAPGNAEDKTT). Polar residues predominate over residues 103–120 (VGESVNGVQQPASSQSDA). Position 116 is a phosphoserine (serine 116). One can recognise a TFIIS central domain in the interval 148 to 264 (LRDQVLKALY…NAQGATIERS (117 aa)). The segment at 267–307 (DRFTCGKCKEKKVSYYQLQTRSADEPLTTFCTCEACGNRWK) adopts a TFIIS-type zinc-finger fold. Cysteine 271, cysteine 274, cysteine 299, and cysteine 302 together coordinate Zn(2+).

This sequence belongs to the TFS-II family.

The protein localises to the nucleus. In terms of biological role, necessary for efficient RNA polymerase II transcription elongation past template-encoded arresting sites. The arresting sites in DNA have the property of trapping a certain fraction of elongating RNA polymerases that pass through, resulting in locked ternary complexes. Cleavage of the nascent transcript by S-II allows the resumption of elongation from the new 3'-terminus. Can promote the transfer of one strand of a double-stranded DNA molecule to a homologous single strand and thus may be involved in recombination. The polypeptide is Transcription elongation factor S-II (DST1) (Saccharomyces cerevisiae (strain ATCC 204508 / S288c) (Baker's yeast)).